Here is a 183-residue protein sequence, read N- to C-terminus: Ribosome rescue factor SmrB (183 aa).

The Smr domain occupies 98–173; sequence LDLHGLTQMQ…GDAALLVLIE (76 aa).

It belongs to the SmrB family. Associates with collided ribosomes, but not with correctly translating polysomes.

Its function is as follows. Acts as a ribosome collision sensor. Detects stalled/collided disomes (pairs of ribosomes where the leading ribosome is stalled and a second ribosome has collided with it) and endonucleolytically cleaves mRNA at the 5' boundary of the stalled ribosome. Stalled/collided disomes form a new interface (primarily via the 30S subunits) that binds SmrB. Cleaved mRNA becomes available for tmRNA ligation, leading to ribosomal subunit dissociation and rescue of stalled ribosomes. In Enterobacter sp. (strain 638), this protein is Ribosome rescue factor SmrB.